The following is a 169-amino-acid chain: Small ribosomal subunit protein uS13m (169 aa).

The segment at 149-169 (KKLQEKKNKEQKKSQKCKTKK) is disordered. The segment covering 150-161 (KLQEKKNKEQKK) has biased composition (basic and acidic residues).

The protein belongs to the universal ribosomal protein uS13 family. Part of the small ribosomal subunit.

It localises to the mitochondrion. Located at the top of the head of the small subunit, it contacts several helices of the small subunit rRNA. The protein is Small ribosomal subunit protein uS13m (mrps13) of Dictyostelium discoideum (Social amoeba).